The sequence spans 574 residues: MSRRLIYVLNINRESTHKIQENEIYTYFSHCNIDHTSTELDFVVKNYDLNRRQPVTGYTALHCYLYNNYFTNDVLKILLNHGVDVTMKTSSGRMPVYILLTRCCNISHDVVIDMIDKDKNHLLHRDYSNLLLEYIKSRYMLLKEEDIDENIVSTLLDKGIDPNFKQDGYTALHYYYLCLAHVYKPGECRKPITIKKAKRIISLFIQHGANLNALDNCGNTPFHLYLSIEMCNNIHMTKMLLTFNPNFEICNNHGLTPILCYITSDYIQHDILVMLIHHYETNVGEMPIDERRIIVFEFIKTYSTRPADSITYLMNRFKNIDIYTRYEGKTLLHVACEYNNTHVIDYLIRINGDINALTDNNKHATQLIIDNKENSPYTINCLLYILRYIVDKNVIRSLVDQLPSLPIFDIKSFEKFISYCILLDDTFYNRHVRNRDSKTYRYAFSKYMSFDKYDGIITKCHKETILLKLSTVLDTTLYAVLRCHNSKKLRRYLTELKKYNNDKSFKIYSNIMNERYLNVYYKDMYVSKVYDKLFPVFTDKNCLLTLLPSEIIYEILYMLTINDLYNISYPPTKV.

6 ANK repeats span residues 56–87, 135–164, 167–213, 217–249, 253–285, and 327–356; these read TGYT…DVTM, IKSR…DPNF, DGYT…NLNA, CGNT…NFEI, HGLT…NVGE, and EGKT…DINA. In terms of domain architecture, F-box spans 541–574; that stretch reads NCLLTLLPSEIIYEILYMLTINDLYNISYPPTKV.

This sequence belongs to the poxvirinae B18 protein family.

The protein is Ankyrin repeat protein B19 of Vaccinia virus (strain Western Reserve) (VACV).